A 231-amino-acid chain; its full sequence is LexA repressor (231 aa).

Residues 1–24 (MTDRKEHKMKPGRRPTEGMTPSQE) form a disordered region. Positions 43 to 62 (VKEIAEALGMKTPSAHEQVQ) form a DNA-binding region, H-T-H motif. Active-site for autocatalytic cleavage activity residues include serine 146 and lysine 183.

It belongs to the peptidase S24 family. As to quaternary structure, homodimer.

The catalysed reaction is Hydrolysis of Ala-|-Gly bond in repressor LexA.. Its function is as follows. Represses a number of genes involved in the response to DNA damage (SOS response), including recA and lexA. In the presence of single-stranded DNA, RecA interacts with LexA causing an autocatalytic cleavage which disrupts the DNA-binding part of LexA, leading to derepression of the SOS regulon and eventually DNA repair. This is LexA repressor from Magnetococcus marinus (strain ATCC BAA-1437 / JCM 17883 / MC-1).